We begin with the raw amino-acid sequence, 1244 residues long: ATP-dependent helicase/nuclease subunit A (1244 aa).

A UvrD-like helicase ATP-binding domain is found at 4–477; that stretch reads TKWTEEQLSA…IQLYKNFRSR (474 aa). 25-32 is an ATP binding site; sequence AAAGSGKT. Positions 517 to 811 constitute a UvrD-like helicase C-terminal domain; sequence KNVDDIIGGP…RIMSIHKSKG (295 aa).

This sequence belongs to the helicase family. AddA subfamily. In terms of assembly, heterodimer of AddA and AddB/RexB. Mg(2+) serves as cofactor.

It catalyses the reaction Couples ATP hydrolysis with the unwinding of duplex DNA by translocating in the 3'-5' direction.. It carries out the reaction ATP + H2O = ADP + phosphate + H(+). The heterodimer acts as both an ATP-dependent DNA helicase and an ATP-dependent, dual-direction single-stranded exonuclease. Recognizes the chi site generating a DNA molecule suitable for the initiation of homologous recombination. The AddA nuclease domain is required for chi fragment generation; this subunit has the helicase and 3' -&gt; 5' nuclease activities. In Clostridium botulinum (strain Alaska E43 / Type E3), this protein is ATP-dependent helicase/nuclease subunit A.